Consider the following 700-residue polypeptide: Transketolase (700 aa).

Position 45 (His-45) interacts with substrate. Residues Thr-48, His-85, and 133 to 135 each bind thiamine diphosphate; that span reads GPL. Asp-177 lines the Mg(2+) pocket. Residues Gly-178 and Asn-207 each contribute to the thiamine diphosphate site. Mg(2+) contacts are provided by Asn-207 and Ile-209. His-283, Arg-378, and Ser-405 together coordinate substrate. Residue His-283 coordinates thiamine diphosphate. Catalysis depends on Glu-441, which acts as the Proton donor. Phe-467 contacts thiamine diphosphate. Substrate is bound by residues His-491, Asp-499, and Arg-552.

It belongs to the transketolase family. As to quaternary structure, homodimer. Mg(2+) serves as cofactor. It depends on Ca(2+) as a cofactor. Requires Mn(2+) as cofactor. The cofactor is Co(2+). Thiamine diphosphate is required as a cofactor.

It catalyses the reaction D-sedoheptulose 7-phosphate + D-glyceraldehyde 3-phosphate = aldehydo-D-ribose 5-phosphate + D-xylulose 5-phosphate. Its function is as follows. Catalyzes the transfer of a two-carbon ketol group from a ketose donor to an aldose acceptor, via a covalent intermediate with the cofactor thiamine pyrophosphate. The polypeptide is Transketolase (tkt) (Mycobacterium bovis (strain ATCC BAA-935 / AF2122/97)).